The sequence spans 937 residues: Periplasmic nitrate reductase (937 aa).

The segment at residues methionine 1–alanine 42 is a signal peptide (tat-type signal). One can recognise a 4Fe-4S Mo/W bis-MGD-type domain in the interval tryptophan 49 to aspartate 110. Residues cysteine 56, cysteine 59, cysteine 63, and cysteine 96 each contribute to the [4Fe-4S] cluster site. Residues lysine 98, glutamine 166, asparagine 191, cysteine 195, tryptophan 228 to methionine 235, methionine 433, glutamine 437, asparagine 543, serine 568 to glutamate 569, lysine 591, aspartate 618, and threonine 827 to serine 836 each bind Mo-bis(molybdopterin guanine dinucleotide). Residue tryptophan 903 coordinates substrate. Positions 911 and 928 each coordinate Mo-bis(molybdopterin guanine dinucleotide).

This sequence belongs to the prokaryotic molybdopterin-containing oxidoreductase family. NasA/NapA/NarB subfamily. As to quaternary structure, component of the periplasmic nitrate reductase NapAB complex composed of NapA and NapB. Requires [4Fe-4S] cluster as cofactor. The cofactor is Mo-bis(molybdopterin guanine dinucleotide). In terms of processing, predicted to be exported by the Tat system. The position of the signal peptide cleavage has not been experimentally proven.

Its subcellular location is the periplasm. It carries out the reaction 2 Fe(II)-[cytochrome] + nitrate + 2 H(+) = 2 Fe(III)-[cytochrome] + nitrite + H2O. Functionally, catalytic subunit of the periplasmic nitrate reductase complex NapAB. Receives electrons from NapB and catalyzes the reduction of nitrate to nitrite. The polypeptide is Periplasmic nitrate reductase (Helicobacter hepaticus (strain ATCC 51449 / 3B1)).